The chain runs to 347 residues: Histidinol-phosphate aminotransferase (347 aa).

An N6-(pyridoxal phosphate)lysine modification is found at lysine 209.

It belongs to the class-II pyridoxal-phosphate-dependent aminotransferase family. Histidinol-phosphate aminotransferase subfamily. In terms of assembly, homodimer. The cofactor is pyridoxal 5'-phosphate.

It catalyses the reaction L-histidinol phosphate + 2-oxoglutarate = 3-(imidazol-4-yl)-2-oxopropyl phosphate + L-glutamate. It functions in the pathway amino-acid biosynthesis; L-histidine biosynthesis; L-histidine from 5-phospho-alpha-D-ribose 1-diphosphate: step 7/9. The chain is Histidinol-phosphate aminotransferase from Geotalea daltonii (strain DSM 22248 / JCM 15807 / FRC-32) (Geobacter daltonii).